We begin with the raw amino-acid sequence, 124 residues long: MARIAGVDIPKQKRGVIALTYIFGIGRSRAQEILAQAKVDESKKVSDWDDDEIGKIREAVGQFTIEGELRTEVQISIKRLMDIGCYRGIRHRAGLPLRGQRTKNNSRTRKGRRKTVANKKKATK.

Positions 94–124 (GLPLRGQRTKNNSRTRKGRRKTVANKKKATK) are disordered. Over residues 100-124 (QRTKNNSRTRKGRRKTVANKKKATK) the composition is skewed to basic residues.

It belongs to the universal ribosomal protein uS13 family. As to quaternary structure, part of the 30S ribosomal subunit. Forms a loose heterodimer with protein S19. Forms two bridges to the 50S subunit in the 70S ribosome.

Its function is as follows. Located at the top of the head of the 30S subunit, it contacts several helices of the 16S rRNA. In the 70S ribosome it contacts the 23S rRNA (bridge B1a) and protein L5 of the 50S subunit (bridge B1b), connecting the 2 subunits; these bridges are implicated in subunit movement. Contacts the tRNAs in the A and P-sites. The polypeptide is Small ribosomal subunit protein uS13 (Christiangramia forsetii (strain DSM 17595 / CGMCC 1.15422 / KT0803) (Gramella forsetii)).